Reading from the N-terminus, the 895-residue chain is MKIGSGFLSGGGGTGSSGGSGSGGGGSGGGGGGGSSGRRAEMEPTFPQGMVMFNHRLPPVTSFTRPAGSAAPPPQCVLSSSTSAAPAAEPPPPPAPDMTFKKEPAASAAAFPSQRTSWGFLQSLVSIKQEKPADPEEQQSHHHHHHHHYGGLFAGAEERSPGLGGGEGGSHGVIQDLSILHQHVQQQPAQHHRDVLLSSSSRTDDHHGTEEPKQDTNVKKAKRPKPESQGIKAKRKPSASSKPSLVGDGEGAILSPSQKPHICDHCSAAFRSSYHLRRHVLIHTGERPFQCSQCSMGFIQKYLLQRHEKIHSREKPFGCDQCSMKFIQKYHMERHKRTHSGEKPYKCDTCQQYFSRTDRLLKHRRTCGEVIVKGATSAEPGSSNHTNMGNLAVLSQGNTSSSRRKTKSKSIAIENKEQKTGKTNESQISNNINMQSYSVEMPTVSSSGGIIGTGIDELQKRVPKLIFKKGSRKNTDKNYLNFVSPLPDIVGQKSLSGKPSGSLGIVSNNSVETIGLLQSTSGKQGQISSNYDDAMQFSKKRRYLPTASSNSAFSINVGHMVSQQSVIQSAGVSVLDNEAPLSLIDSSALNAEIKSCHDKSGIPDEVLQSILDQYSNKSESQKEDPFNIAEPRVDLHTSGEHSELVQEENLSPGTQTPSNDKASMLQEYSKYLQQAFEKSTNASFTLGHGFQFVSLSSPLHNHTLFPEKQIYTTSPLECGFGQSVTSVLPSSLPKPPFGMLFGSQPGLYLSALDATHQQLTPSQELDDLIDSQKNLETSSAFQSSSQKLTSQKEQKNLESSTGFQIPSQELASQIDPQKDIEPRTTYQIENFAQAFGSQFKSGSRVPMTFITNSNGEVDHRVRTSVSDFSGYTNMMSDVSEPCSTRVKTPTSQSYR.

Disordered stretches follow at residues 1–44 (MKIG…EMEP) and 63–113 (FTRP…AFPS). Residue Lys2 forms a Glycyl lysine isopeptide (Lys-Gly) (interchain with G-Cter in SUMO2) linkage. Residues 7-36 (FLSGGGGTGSSGGSGSGGGGSGGGGGGGSS) show a composition bias toward gly residues. Glycyl lysine isopeptide (Lys-Gly) (interchain with G-Cter in SUMO2) cross-links involve residues Arg65, Lys101, and Lys128. Composition is skewed to basic and acidic residues over residues 130 to 140 (EKPADPEEQQS) and 202 to 218 (RTDD…DTNV). Disordered regions lie at residues 130-149 (EKPA…HHHY) and 183-253 (HVQQ…EGAI). Residues Lys213, Lys219, Lys225, Lys232, Lys242, and Lys259 each participate in a glycyl lysine isopeptide (Lys-Gly) (interchain with G-Cter in SUMO2) cross-link. C2H2-type zinc fingers lie at residues 261–283 (HICD…VLIH), 289–311 (FQCS…EKIH), and 317–339 (FGCD…KRTH). Glycyl lysine isopeptide (Lys-Gly) (interchain with G-Cter in SUMO2) cross-links involve residues Lys301 and Lys325. The C2H2-type 4; atypical zinc finger occupies 345–367 (YKCDTCQQYFSRTDRLLKHRRTC). A Glycyl lysine isopeptide (Lys-Gly) (interchain with G-Cter in SUMO2) cross-link involves residue Lys373. The disordered stretch occupies residues 377–427 (SAEPGSSNHTNMGNLAVLSQGNTSSSRRKTKSKSIAIENKEQKTGKTNESQ). Polar residues predominate over residues 379–398 (EPGSSNHTNMGNLAVLSQGN). At Ser395 the chain carries Phosphoserine. Residues Lys409, Lys416, Lys460, and Lys477 each participate in a glycyl lysine isopeptide (Lys-Gly) (interchain with G-Cter in SUMO2) cross-link. Ser484 bears the Phosphoserine mark. Residues Lys493, Lys498, Lys539, Lys599, Lys617, and Lys622 each participate in a glycyl lysine isopeptide (Lys-Gly) (interchain with G-Cter in SUMO2) cross-link. The segment at 638-660 (SGEHSELVQEENLSPGTQTPSND) is disordered. Over residues 648-660 (ENLSPGTQTPSND) the composition is skewed to polar residues. Ser651 carries the phosphoserine modification. Glycyl lysine isopeptide (Lys-Gly) (interchain with G-Cter in SUMO2) cross-links involve residues Lys661 and Lys670. Positions 778-789 (SSAFQSSSQKLT) are enriched in polar residues. The disordered stretch occupies residues 778–817 (SSAFQSSSQKLTSQKEQKNLESSTGFQIPSQELASQIDPQ). Phosphoserine is present on Ser785. Residues Lys787, Lys792, and Lys795 each participate in a glycyl lysine isopeptide (Lys-Gly) (interchain with G-Cter in SUMO2) cross-link. Positions 797-815 (LESSTGFQIPSQELASQID) are enriched in polar residues. Phosphoserine is present on Ser807. Glycyl lysine isopeptide (Lys-Gly) (interchain with G-Cter in SUMO2) cross-links involve residues Lys818 and Lys840. Position 888 is a phosphothreonine (Thr888).

It belongs to the krueppel C2H2-type zinc-finger protein family.

Its subcellular location is the nucleus. Its function is as follows. Transcription repressor that plays a role in regulation of embryonic stem cells (ESCs) differentiation. Required for ESCs differentiation and acts by mediating autorepression of NANOG in ESCs: binds to the NANOG promoter and promotes association of NANOG protein to its own promoter and recruits the NuRD complex, which deacetylates histones. Not required for establishement and maintenance of ESCs. Represses the transcription of a number of genes including GAST, ODC1 and VIM. Binds to the G-rich box in the enhancer region of these genes. The sequence is that of Zinc finger protein 281 (ZNF281) from Homo sapiens (Human).